A 305-amino-acid polypeptide reads, in one-letter code: Glycine--tRNA ligase alpha subunit (305 aa).

The protein belongs to the class-II aminoacyl-tRNA synthetase family. In terms of assembly, tetramer of two alpha and two beta subunits.

It localises to the cytoplasm. It carries out the reaction tRNA(Gly) + glycine + ATP = glycyl-tRNA(Gly) + AMP + diphosphate. In Streptococcus pyogenes serotype M4 (strain MGAS10750), this protein is Glycine--tRNA ligase alpha subunit.